An 86-amino-acid polypeptide reads, in one-letter code: UPF0297 protein SSP1144 (86 aa).

This sequence belongs to the UPF0297 family.

The sequence is that of UPF0297 protein SSP1144 from Staphylococcus saprophyticus subsp. saprophyticus (strain ATCC 15305 / DSM 20229 / NCIMB 8711 / NCTC 7292 / S-41).